The primary structure comprises 862 residues: DNA topoisomerase 3-beta-1 (862 aa).

The Toprim domain maps to 3-153; that stretch reads TVLMVAEKPS…EKTVFRARFS (151 aa). The region spanning 171–593 is the Topo IA-type catalytic domain; that stretch reads DHNEALSVDA…HTLDIFKRKF (423 aa). Catalysis depends on Y336, which acts as the O-(5'-phospho-DNA)-tyrosine intermediate. The disordered stretch occupies residues 820 to 855; it reads HPMHRGGPGRRQGRGRGRGRRPPGKPNPRRPKDKMS. The segment covering 821–851 has biased composition (basic residues); it reads PMHRGGPGRRQGRGRGRGRRPPGKPNPRRPK.

This sequence belongs to the type IA topoisomerase family. Highly expressed in testis.

The catalysed reaction is ATP-independent breakage of single-stranded DNA, followed by passage and rejoining.. Releases the supercoiling and torsional tension of DNA introduced during the DNA replication and transcription by transiently cleaving and rejoining one strand of the DNA duplex. Introduces a single-strand break via transesterification at a target site in duplex DNA. The scissile phosphodiester is attacked by the catalytic tyrosine of the enzyme, resulting in the formation of a DNA-(5'-phosphotyrosyl)-enzyme intermediate and the expulsion of a 3'-OH DNA strand. The free DNA strand than undergoes passage around the unbroken strand thus removing DNA supercoils. Finally, in the religation step, the DNA 3'-OH attacks the covalent intermediate to expel the active-site tyrosine and restore the DNA phosphodiester backbone. Possesses negatively supercoiled DNA relaxing activity. In Mus musculus (Mouse), this protein is DNA topoisomerase 3-beta-1 (Top3b).